We begin with the raw amino-acid sequence, 380 residues long: D-alanine--D-alanine ligase (380 aa).

The region spanning 142-348 (KQVLTAHGIR…YADLIDRLIE (207 aa)) is the ATP-grasp domain. Position 172–227 (172–227 (QSRLGDNVFIKPANQGSSVGIHKASNVQEYLDGVADAFRYDYKVLVEQTIDGPQEV)) interacts with ATP. Residues Asp-302, Glu-315, and Asn-317 each contribute to the Mg(2+) site.

This sequence belongs to the D-alanine--D-alanine ligase family. It depends on Mg(2+) as a cofactor. Requires Mn(2+) as cofactor.

It is found in the cytoplasm. The catalysed reaction is 2 D-alanine + ATP = D-alanyl-D-alanine + ADP + phosphate + H(+). The protein operates within cell wall biogenesis; peptidoglycan biosynthesis. In terms of biological role, cell wall formation. The protein is D-alanine--D-alanine ligase of Levilactobacillus brevis (strain ATCC 367 / BCRC 12310 / CIP 105137 / JCM 1170 / LMG 11437 / NCIMB 947 / NCTC 947) (Lactobacillus brevis).